The following is a 220-amino-acid chain: Ribonuclease P protein subunit p29 (220 aa).

Residue Ser-10 is modified to Phosphoserine.

It belongs to the eukaryotic/archaeal RNase P protein component 1 family. Component of nuclear RNase P and RNase MRP ribonucleoproteins. RNase P consists of a catalytic RNA moiety and 10 different protein chains; POP1, POP4, POP5, POP7, RPP14, RPP21, RPP25, RPP30, RPP38 and RPP40. Within the RNase P complex, POP1, POP7 and RPP25 form the 'finger' subcomplex, POP5, RPP14, RPP40 and homodimeric RPP30 form the 'palm' subcomplex, and RPP21, POP4 and RPP38 form the 'wrist' subcomplex. All subunits of the RNase P complex interact with the catalytic RNA. Several subunits of RNase P are also part of the RNase MRP complex. RNase MRP consists of a catalytic RNA moiety and about 8 protein subunits; POP1, POP7, RPP25, RPP30, RPP38, RPP40 and possibly also POP4 and POP5.

It localises to the nucleus. The protein localises to the nucleolus. Functionally, component of ribonuclease P, a ribonucleoprotein complex that generates mature tRNA molecules by cleaving their 5'-ends. The polypeptide is Ribonuclease P protein subunit p29 (POP4) (Pongo abelii (Sumatran orangutan)).